The sequence spans 109 residues: Ribonuclease P protein component 2 (109 aa).

The protein belongs to the eukaryotic/archaeal RNase P protein component 2 family. As to quaternary structure, consists of a catalytic RNA component and at least 4-5 protein subunits.

It localises to the cytoplasm. It carries out the reaction Endonucleolytic cleavage of RNA, removing 5'-extranucleotides from tRNA precursor.. Its function is as follows. Part of ribonuclease P, a protein complex that generates mature tRNA molecules by cleaving their 5'-ends. The protein is Ribonuclease P protein component 2 of Archaeoglobus fulgidus (strain ATCC 49558 / DSM 4304 / JCM 9628 / NBRC 100126 / VC-16).